The chain runs to 606 residues: Elongation factor 4 (606 aa).

Residues 7-189 (SRIRNFCIIA…AVVDRVPPPK (183 aa)) form the tr-type G domain. GTP contacts are provided by residues 19–24 (DHGKST) and 136–139 (NKID).

Belongs to the TRAFAC class translation factor GTPase superfamily. Classic translation factor GTPase family. LepA subfamily.

The protein localises to the cell inner membrane. It carries out the reaction GTP + H2O = GDP + phosphate + H(+). In terms of biological role, required for accurate and efficient protein synthesis under certain stress conditions. May act as a fidelity factor of the translation reaction, by catalyzing a one-codon backward translocation of tRNAs on improperly translocated ribosomes. Back-translocation proceeds from a post-translocation (POST) complex to a pre-translocation (PRE) complex, thus giving elongation factor G a second chance to translocate the tRNAs correctly. Binds to ribosomes in a GTP-dependent manner. The chain is Elongation factor 4 from Parasynechococcus marenigrum (strain WH8102).